The following is a 204-amino-acid chain: Urease accessory protein UreG (204 aa).

Residue 11 to 18 (GPVGAGKH) participates in GTP binding.

Belongs to the SIMIBI class G3E GTPase family. UreG subfamily. In terms of assembly, homodimer. UreD, UreF and UreG form a complex that acts as a GTP-hydrolysis-dependent molecular chaperone, activating the urease apoprotein by helping to assemble the nickel containing metallocenter of UreC. The UreE protein probably delivers the nickel.

It localises to the cytoplasm. In terms of biological role, facilitates the functional incorporation of the urease nickel metallocenter. This process requires GTP hydrolysis, probably effectuated by UreG. The polypeptide is Urease accessory protein UreG (Staphylococcus xylosus).